The primary structure comprises 261 residues: Hydroxyethylthiazole kinase (261 aa).

Met-39 provides a ligand contact to substrate. ATP contacts are provided by Arg-115 and Thr-159. Gly-186 is a substrate binding site.

The protein belongs to the Thz kinase family. The cofactor is Mg(2+).

The enzyme catalyses 5-(2-hydroxyethyl)-4-methylthiazole + ATP = 4-methyl-5-(2-phosphooxyethyl)-thiazole + ADP + H(+). Its pathway is cofactor biosynthesis; thiamine diphosphate biosynthesis; 4-methyl-5-(2-phosphoethyl)-thiazole from 5-(2-hydroxyethyl)-4-methylthiazole: step 1/1. Functionally, catalyzes the phosphorylation of the hydroxyl group of 4-methyl-5-beta-hydroxyethylthiazole (THZ). The protein is Hydroxyethylthiazole kinase of Macrococcus caseolyticus (strain JCSC5402) (Macrococcoides caseolyticum).